The chain runs to 332 residues: Ribose-phosphate pyrophosphokinase (332 aa).

An ATP-binding site is contributed by 55 to 57; sequence DGE. 2 residues coordinate Mg(2+): histidine 148 and aspartate 187. The active site involves lysine 211. D-ribose 5-phosphate-binding positions include arginine 213, aspartate 237, and 241 to 245; that span reads DTGGT.

This sequence belongs to the ribose-phosphate pyrophosphokinase family. Class I subfamily. In terms of assembly, homohexamer. It depends on Mg(2+) as a cofactor.

The protein localises to the cytoplasm. It catalyses the reaction D-ribose 5-phosphate + ATP = 5-phospho-alpha-D-ribose 1-diphosphate + AMP + H(+). It participates in metabolic intermediate biosynthesis; 5-phospho-alpha-D-ribose 1-diphosphate biosynthesis; 5-phospho-alpha-D-ribose 1-diphosphate from D-ribose 5-phosphate (route I): step 1/1. In terms of biological role, involved in the biosynthesis of the central metabolite phospho-alpha-D-ribosyl-1-pyrophosphate (PRPP) via the transfer of pyrophosphoryl group from ATP to 1-hydroxyl of ribose-5-phosphate (Rib-5-P). This Prochlorococcus marinus (strain MIT 9313) protein is Ribose-phosphate pyrophosphokinase.